The chain runs to 154 residues: NADPH-dependent 7-cyano-7-deazaguanine reductase (154 aa).

Residues 1–21 (MPNTDVSSLSMLGHQTETASS) show a composition bias toward polar residues. The interval 1 to 26 (MPNTDVSSLSMLGHQTETASSPEEAV) is disordered. The Thioimide intermediate role is filled by Cys-52. The active-site Proton donor is the Asp-59. Substrate-binding positions include 74 to 76 (VES) and 93 to 94 (HE).

Belongs to the GTP cyclohydrolase I family. QueF type 1 subfamily.

It is found in the cytoplasm. The catalysed reaction is 7-aminomethyl-7-carbaguanine + 2 NADP(+) = 7-cyano-7-deazaguanine + 2 NADPH + 3 H(+). The protein operates within tRNA modification; tRNA-queuosine biosynthesis. Its function is as follows. Catalyzes the NADPH-dependent reduction of 7-cyano-7-deazaguanine (preQ0) to 7-aminomethyl-7-deazaguanine (preQ1). The polypeptide is NADPH-dependent 7-cyano-7-deazaguanine reductase (Rhizobium etli (strain ATCC 51251 / DSM 11541 / JCM 21823 / NBRC 15573 / CFN 42)).